The sequence spans 156 residues: Snaclec 2 (156 aa).

A signal peptide spans 1–21; that stretch reads MGRFIFLSSGLLVVFLSLSGA. 3 cysteine pairs are disulfide-bonded: cysteine 25–cysteine 36, cysteine 53–cysteine 150, and cysteine 125–cysteine 142. The C-type lectin domain occupies 32 to 151; the sequence is FDQHCYRAFD…CGDDYPFVCK (120 aa).

This sequence belongs to the snaclec family. Heterodimer; disulfide-linked. Expressed by the venom gland.

It localises to the secreted. Its function is as follows. Interferes with one step of hemostasis (modulation of platelet aggregation, or coagulation cascade, for example). This is Snaclec 2 from Bitis gabonica (Gaboon adder).